The primary structure comprises 377 residues: Alanine racemase, catabolic (377 aa).

Residue K51 is the Proton acceptor; specific for D-alanine of the active site. K51 carries the post-translational modification N6-(pyridoxal phosphate)lysine. Position 150 (R150) interacts with substrate. The Proton acceptor; specific for L-alanine role is filled by Y272. M320 contacts substrate.

The protein belongs to the alanine racemase family. Pyridoxal 5'-phosphate is required as a cofactor.

The enzyme catalyses L-alanine = D-alanine. Its function is as follows. Isomerizes L-alanine to D-alanine which is then oxidized to pyruvate by DadA. This chain is Alanine racemase, catabolic (dadX), found in Rhizobium johnstonii (strain DSM 114642 / LMG 32736 / 3841) (Rhizobium leguminosarum bv. viciae).